Here is a 798-residue protein sequence, read N- to C-terminus: Type 2 DNA topoisomerase 6 subunit B (798 aa).

ATP-binding positions include Asn-60, Asp-91, 112–113 (SR), and 122–129 (GQQGIGIS). Over residues 221 to 233 (EPEDSFKSERATE) the composition is skewed to basic and acidic residues. The segment at 221-245 (EPEDSFKSERATEELPPETEEIRPH) is disordered. Residue Lys-629 coordinates ATP.

The protein belongs to the TOP6B family. In terms of assembly, homodimer. Heterotetramer of two Top6A and two Top6B chains.

The catalysed reaction is ATP-dependent breakage, passage and rejoining of double-stranded DNA.. Its function is as follows. Relaxes both positive and negative superturns and exhibits a strong decatenase activity. This chain is Type 2 DNA topoisomerase 6 subunit B, found in Natronomonas pharaonis (strain ATCC 35678 / DSM 2160 / CIP 103997 / JCM 8858 / NBRC 14720 / NCIMB 2260 / Gabara) (Halobacterium pharaonis).